Here is a 210-residue protein sequence, read N- to C-terminus: Large ribosomal subunit protein bL17 (210 aa).

The interval 177–210 is disordered; it reads TRSAQRPAFEQDAPESDSAPEAEAKTEEETASAN.

The protein belongs to the bacterial ribosomal protein bL17 family. Part of the 50S ribosomal subunit. Contacts protein L32.

The sequence is that of Large ribosomal subunit protein bL17 from Rhodopirellula baltica (strain DSM 10527 / NCIMB 13988 / SH1).